The primary structure comprises 97 residues: Co-chaperonin GroES (97 aa).

This sequence belongs to the GroES chaperonin family. As to quaternary structure, heptamer of 7 subunits arranged in a ring. Interacts with the chaperonin GroEL.

The protein resides in the cytoplasm. Together with the chaperonin GroEL, plays an essential role in assisting protein folding. The GroEL-GroES system forms a nano-cage that allows encapsulation of the non-native substrate proteins and provides a physical environment optimized to promote and accelerate protein folding. GroES binds to the apical surface of the GroEL ring, thereby capping the opening of the GroEL channel. The polypeptide is Co-chaperonin GroES (Yersinia pseudotuberculosis serotype O:1b (strain IP 31758)).